We begin with the raw amino-acid sequence, 180 residues long: Segregation and condensation protein B (180 aa).

Belongs to the ScpB family. As to quaternary structure, homodimer. Homodimerization may be required to stabilize the binding of ScpA to the Smc head domains. Component of a cohesin-like complex composed of ScpA, ScpB and the Smc homodimer, in which ScpA and ScpB bind to the head domain of Smc. The presence of the three proteins is required for the association of the complex with DNA.

It localises to the cytoplasm. Its function is as follows. Participates in chromosomal partition during cell division. May act via the formation of a condensin-like complex containing Smc and ScpA that pull DNA away from mid-cell into both cell halves. The polypeptide is Segregation and condensation protein B (Staphylococcus epidermidis (strain ATCC 35984 / DSM 28319 / BCRC 17069 / CCUG 31568 / BM 3577 / RP62A)).